Reading from the N-terminus, the 329-residue chain is tRNA pseudouridine synthase B (329 aa).

The active-site Nucleophile is Asp-42.

The protein belongs to the pseudouridine synthase TruB family. Type 1 subfamily.

The enzyme catalyses uridine(55) in tRNA = pseudouridine(55) in tRNA. In terms of biological role, responsible for synthesis of pseudouridine from uracil-55 in the psi GC loop of transfer RNAs. The protein is tRNA pseudouridine synthase B of Lactococcus lactis subsp. lactis (strain IL1403) (Streptococcus lactis).